The sequence spans 181 residues: ADP-ribosylation factor 1 (181 aa).

Gly-2 is lipidated: N-myristoyl glycine. GTP-binding positions include 24–31 (GLDAAGKT), 67–71 (DVGGQ), and 126–129 (NKQD).

It belongs to the small GTPase superfamily. Arf family. As to expression, seedling shoots.

It localises to the golgi apparatus. The enzyme catalyses GTP + H2O = GDP + phosphate + H(+). In terms of biological role, GTP-binding protein involved in protein trafficking; may modulate vesicle budding and uncoating within the Golgi apparatus. The sequence is that of ADP-ribosylation factor 1 from Oryza sativa subsp. japonica (Rice).